Consider the following 404-residue polypeptide: tRNA N6-adenosine threonylcarbamoyltransferase, mitochondrial (404 aa).

The N-terminal 27 residues, 1–27 (MFQSCLPGALRSWSRGVFSTSTRPRLV), are a transit peptide targeting the mitochondrion. Residues histidine 135 and histidine 139 each coordinate a divalent metal cation. Substrate contacts are provided by residues 157-161 (LVSGG), aspartate 190, glycine 210, glutamate 214, 317-318 (SN), and threonine 345. An a divalent metal cation-binding site is contributed by aspartate 346.

Belongs to the KAE1 / TsaD family. In terms of assembly, monomer. It depends on a divalent metal cation as a cofactor.

It is found in the mitochondrion. The enzyme catalyses L-threonylcarbamoyladenylate + adenosine(37) in tRNA = N(6)-L-threonylcarbamoyladenosine(37) in tRNA + AMP + H(+). Functionally, required for the formation of a threonylcarbamoyl group on adenosine at position 37 (t(6)A37) in mitochondrial tRNAs that read codons beginning with adenine. Probably involved in the transfer of the threonylcarbamoyl moiety of threonylcarbamoyl-AMP (TC-AMP) to the N6 group of A37. Involved in mitochondrial genome maintenance. The polypeptide is tRNA N6-adenosine threonylcarbamoyltransferase, mitochondrial (Danio rerio (Zebrafish)).